The sequence spans 188 residues: Acireductone dioxygenase (188 aa).

4 residues coordinate Fe(2+): His97, His99, Glu103, and His141. The Ni(2+) site is built by His97, His99, Glu103, and His141.

It belongs to the acireductone dioxygenase (ARD) family. Monomer. Fe(2+) is required as a cofactor. It depends on Ni(2+) as a cofactor.

It catalyses the reaction 1,2-dihydroxy-5-(methylsulfanyl)pent-1-en-3-one + O2 = 3-(methylsulfanyl)propanoate + CO + formate + 2 H(+). It carries out the reaction 1,2-dihydroxy-5-(methylsulfanyl)pent-1-en-3-one + O2 = 4-methylsulfanyl-2-oxobutanoate + formate + 2 H(+). Its pathway is amino-acid biosynthesis; L-methionine biosynthesis via salvage pathway; L-methionine from S-methyl-5-thio-alpha-D-ribose 1-phosphate: step 5/6. Its function is as follows. Catalyzes 2 different reactions between oxygen and the acireductone 1,2-dihydroxy-3-keto-5-methylthiopentene (DHK-MTPene) depending upon the metal bound in the active site. Fe-containing acireductone dioxygenase (Fe-ARD) produces formate and 2-keto-4-methylthiobutyrate (KMTB), the alpha-ketoacid precursor of methionine in the methionine recycle pathway. Ni-containing acireductone dioxygenase (Ni-ARD) produces methylthiopropionate, carbon monoxide and formate, and does not lie on the methionine recycle pathway. The polypeptide is Acireductone dioxygenase (Gluconobacter oxydans (strain 621H) (Gluconobacter suboxydans)).